We begin with the raw amino-acid sequence, 278 residues long: Probable septum site-determining protein MinC (278 aa).

A disordered region spans residues 104-167 (RTQQSVDPAP…ASHTPAAPQS (64 aa)).

The protein belongs to the MinC family. Interacts with MinD and FtsZ.

In terms of biological role, cell division inhibitor that blocks the formation of polar Z ring septums. Rapidly oscillates between the poles of the cell to destabilize FtsZ filaments that have formed before they mature into polar Z rings. Prevents FtsZ polymerization. This Bordetella avium (strain 197N) protein is Probable septum site-determining protein MinC.